We begin with the raw amino-acid sequence, 413 residues long: Multifunctional CCA protein (413 aa).

Positions 8 and 11 each coordinate ATP. Residues Gly8 and Arg11 each contribute to the CTP site. Positions 21 and 23 each coordinate Mg(2+). ATP contacts are provided by Arg91, Arg143, and Arg146. The CTP site is built by Arg91, Arg143, and Arg146. One can recognise an HD domain in the interval 232–333 (TGVHVMMVID…VRLLERADAL (102 aa)).

Belongs to the tRNA nucleotidyltransferase/poly(A) polymerase family. Bacterial CCA-adding enzyme type 1 subfamily. Monomer. Can also form homodimers and oligomers. Mg(2+) serves as cofactor. It depends on Ni(2+) as a cofactor.

The enzyme catalyses a tRNA precursor + 2 CTP + ATP = a tRNA with a 3' CCA end + 3 diphosphate. The catalysed reaction is a tRNA with a 3' CCA end + 2 CTP + ATP = a tRNA with a 3' CCACCA end + 3 diphosphate. Functionally, catalyzes the addition and repair of the essential 3'-terminal CCA sequence in tRNAs without using a nucleic acid template. Adds these three nucleotides in the order of C, C, and A to the tRNA nucleotide-73, using CTP and ATP as substrates and producing inorganic pyrophosphate. tRNA 3'-terminal CCA addition is required both for tRNA processing and repair. Also involved in tRNA surveillance by mediating tandem CCA addition to generate a CCACCA at the 3' terminus of unstable tRNAs. While stable tRNAs receive only 3'-terminal CCA, unstable tRNAs are marked with CCACCA and rapidly degraded. This is Multifunctional CCA protein from Burkholderia mallei (strain NCTC 10247).